Consider the following 241-residue polypeptide: Probable GTP-binding protein EngB (241 aa).

The EngB-type G domain occupies 56-240; it reads GPVEIAFAGR…RAAIALLLKE (185 aa). GTP-binding positions include 64–71, 91–95, 118–121, 185–188, and 219–221; these read GRSNVGKS, GRTQE, DMPG, TKID, and TSS. The Mg(2+) site is built by S71 and T93.

The protein belongs to the TRAFAC class TrmE-Era-EngA-EngB-Septin-like GTPase superfamily. EngB GTPase family. It depends on Mg(2+) as a cofactor.

Necessary for normal cell division and for the maintenance of normal septation. The protein is Probable GTP-binding protein EngB of Brucella suis biovar 1 (strain 1330).